A 432-amino-acid polypeptide reads, in one-letter code: Adenylosuccinate synthetase (432 aa).

GTP contacts are provided by residues 13 to 19 (GDEGKGK) and 41 to 43 (GHT). D14 acts as the Proton acceptor in catalysis. Mg(2+) contacts are provided by D14 and G41. Residues 14–17 (DEGK), 39–42 (NAGH), T130, R144, Q225, T240, and R304 contribute to the IMP site. H42 serves as the catalytic Proton donor. 300–306 (AVTGRPR) contacts substrate. GTP contacts are provided by residues R306, 332–334 (KLD), and 415–417 (STG).

The protein belongs to the adenylosuccinate synthetase family. As to quaternary structure, homodimer. Mg(2+) is required as a cofactor.

Its subcellular location is the cytoplasm. The catalysed reaction is IMP + L-aspartate + GTP = N(6)-(1,2-dicarboxyethyl)-AMP + GDP + phosphate + 2 H(+). It functions in the pathway purine metabolism; AMP biosynthesis via de novo pathway; AMP from IMP: step 1/2. In terms of biological role, plays an important role in the de novo pathway of purine nucleotide biosynthesis. Catalyzes the first committed step in the biosynthesis of AMP from IMP. The protein is Adenylosuccinate synthetase of Haemophilus influenzae (strain 86-028NP).